The chain runs to 621 residues: Na(+)/H(+) antiporter NhaA (621 aa).

The interval 1–430 (MPASSFGESS…LGWLIFKVAA (430 aa)) is na(+)/H(+) antiporter NhaA. 11 helical membrane passes run 27–47 (GAAVLLVIVTVVALVWANSPL), 72–92 (LHHWVNDGLMVVFFFLIGLEV), 109–129 (LALIAGVTGVVLPALVYVLIV), 139–159 (GWGAVVGTDTAFMLGTLAIVG), 168–188 (VFLLTLTVVDDFLAVSIIGIV), 192–212 (EIRIVPLLIALASLVGLWLLG), 223–243 (VLIVIVLWFATVYSGIHASLA), 300–320 (FLRLPTALLIVPIFALANAGV), 339–359 (VIAGLVLGKLLGIGLTTLVAV), 375–395 (VFGGAALSGIGFTVSLLIIGL), and 409–429 (VGVLVSMVFATLLGWLIFKVA). The 148-residue stretch at 431–578 (QRWGEKTADL…VERDLASAVA (148 aa)) folds into the Thioredoxin domain.

It in the N-terminal section; belongs to the NhaA Na(+)/H(+) (TC 2.A.33) antiporter family.

The protein localises to the cell inner membrane. It catalyses the reaction Na(+)(in) + 2 H(+)(out) = Na(+)(out) + 2 H(+)(in). Functionally, na(+)/H(+) antiporter that extrudes sodium in exchange for external protons. The protein is Na(+)/H(+) antiporter NhaA of Herminiimonas arsenicoxydans.